The primary structure comprises 212 residues: Ras-related protein Rab-15 (212 aa).

Residues Ser-17, Gly-18, Val-19, Gly-20, Lys-21, Thr-22, Cys-23, Ser-35, Ser-39, and Thr-40 each contribute to the GTP site. Thr-22 contacts Mg(2+). 2 consecutive short sequence motifs (switch) follow at residues Asn-31 to Phe-45 and Asp-63 to Arg-80. Mg(2+) contacts are provided by Thr-40 and Asp-63. Residues Gly-66, Asn-121, Lys-122, Asp-124, Ser-151, and Ala-152 each coordinate GTP. Positions Leu-193–Cys-212 are disordered. Residues Cys-210 and Cys-212 are each lipidated (S-geranylgeranyl cysteine). Residue Cys-212 is modified to Cysteine methyl ester.

This sequence belongs to the small GTPase superfamily. Rab family. As to quaternary structure, the GTP bound form of RAB15 interacts with REP15. Interacts (GTP-bound form) with MICAL1, MICAL3, MICALCL, EHBP1 and EHBP1L1. The cofactor is Mg(2+).

It is found in the cell membrane. It carries out the reaction GTP + H2O = GDP + phosphate + H(+). Its activity is regulated as follows. Regulated by guanine nucleotide exchange factors (GEFs) which promote the exchange of bound GDP for free GTP. Regulated by GTPase activating proteins (GAPs) which increase the GTP hydrolysis activity. Inhibited by GDP dissociation inhibitors (GDIs). Its function is as follows. The small GTPases Rab are key regulators of intracellular membrane trafficking, from the formation of transport vesicles to their fusion with membranes. Rabs cycle between an inactive GDP-bound form and an active GTP-bound form that is able to recruit to membranes different sets of downstream effectors directly responsible for vesicle formation, movement, tethering and fusion. RAB15 may act in concert with RAB3A in regulating aspects of synaptic vesicle membrane flow within the nerve terminal. This chain is Ras-related protein Rab-15, found in Homo sapiens (Human).